The chain runs to 294 residues: MSWIERIFNKSTIIPTRKIDIPKGIWTKCDNCGQLLYKKELERNLEVCPKCDHHMRIAARVRLFSFLDKGSTSELGSEFEPKDVLKFRDSKRYKDRLISAQKITKEKDALIVMQGTLYGMKIVAASFEFAFIGGSMSSVVGARFVHAVNQALKIKCPLVCFTASGGARMQEALMSLMQMARTSAALANLHERCLPYISVLTNPTMGGVSASLAMLGDLNIAEPKALIGFAGPRIIEQTVREKLPLGFQRSEFLLEKGSIDLIIRRPDLRFKVAGLLAKLTQQPIPKVDYRHCVE.

Residues 25–294 (IWTKCDNCGQ…PKVDYRHCVE (270 aa)) form the CoA carboxyltransferase N-terminal domain. Zn(2+) contacts are provided by Cys29, Cys32, Cys48, and Cys51. A C4-type zinc finger spans residues 29–51 (CDNCGQLLYKKELERNLEVCPKC).

It belongs to the AccD/PCCB family. Acetyl-CoA carboxylase is a heterohexamer composed of biotin carboxyl carrier protein (AccB), biotin carboxylase (AccC) and two subunits each of ACCase subunit alpha (AccA) and ACCase subunit beta (AccD). Zn(2+) is required as a cofactor.

The protein localises to the cytoplasm. It catalyses the reaction N(6)-carboxybiotinyl-L-lysyl-[protein] + acetyl-CoA = N(6)-biotinyl-L-lysyl-[protein] + malonyl-CoA. Its pathway is lipid metabolism; malonyl-CoA biosynthesis; malonyl-CoA from acetyl-CoA: step 1/1. In terms of biological role, component of the acetyl coenzyme A carboxylase (ACC) complex. Biotin carboxylase (BC) catalyzes the carboxylation of biotin on its carrier protein (BCCP) and then the CO(2) group is transferred by the transcarboxylase to acetyl-CoA to form malonyl-CoA. This is Acetyl-coenzyme A carboxylase carboxyl transferase subunit beta from Blochmanniella pennsylvanica (strain BPEN).